The sequence spans 2005 residues: Chitin synthase 8 (2005 aa).

One can recognise a Myosin motor domain in the interval 5 to 773; it reads DEVAKLSQLT…AFRELEDELR (769 aa). 108 to 115 is an ATP binding site; sequence GDTSSGKS. Asparagine 164, asparagine 364, asparagine 390, and asparagine 546 each carry an N-linked (GlcNAc...) asparagine glycan. Residues 585-631 form a disordered region; it reads QSVKPMRAPSTRRPNRGNTIKRTNTIKKADDDDSDEDAADAADASTS. The span at 615-624 shows a compositional bias: acidic residues; that stretch reads DDDSDEDAAD. The segment at 647–669 is actin-binding; that stretch reads LDLLLETLEDTKTWFTLCLRPND. Helical transmembrane passes span 929–949 and 965–985; these read KWVA…LSRF and LAIN…IVVL. Asparagine 1076 carries N-linked (GlcNAc...) asparagine glycosylation. 3 consecutive transmembrane segments (helical) span residues 1232 to 1252, 1604 to 1624, and 1626 to 1646; these read ILLA…LAAL, LIFT…IVFI, and LLST…IVLV. A glycan (N-linked (GlcNAc...) asparagine) is linked at asparagine 1650. The next 2 helical transmembrane spans lie at 1653 to 1673 and 1680 to 1700; these read VPLT…VIFL and MIGW…FLPL. N-linked (GlcNAc...) asparagine glycosylation is found at asparagine 1770 and asparagine 1794. The segment at 1796–1821 is disordered; that stretch reads SFGHSPSPSYGGTPSQFGAFAPGPGS. Polar residues predominate over residues 1797-1811; sequence FGHSPSPSYGGTPSQ. N-linked (GlcNAc...) asparagine glycosylation occurs at asparagine 1882. The interval 1912–1950 is disordered; sequence FATAEQQQQQQQQQQAAGLSGSGGSKSPPREAVAGGLPS. Residues 1917 to 1930 are compositionally biased toward low complexity; sequence QQQQQQQQQQAAGL. Residues 1948–2003 enclose the DEK-C domain; that stretch reads LPSDSQIKLDIRSLIAESDLTTITKKQLRAKLEQKYATSIESKKAFINSEIENVLS.

It in the N-terminal section; belongs to the TRAFAC class myosin-kinesin ATPase superfamily. Myosin family. The protein in the C-terminal section; belongs to the chitin synthase family. Class V subfamily.

The protein resides in the cell membrane. Its subcellular location is the cytoplasmic vesicle membrane. It localises to the cell tip. The catalysed reaction is [(1-&gt;4)-N-acetyl-beta-D-glucosaminyl](n) + UDP-N-acetyl-alpha-D-glucosamine = [(1-&gt;4)-N-acetyl-beta-D-glucosaminyl](n+1) + UDP + H(+). Functionally, polymerizes chitin, a structural polymer of the cell wall and septum, by transferring the sugar moiety of UDP-GlcNAc to the non-reducing end of the growing chitin polymer. Involved in mating tube and dikaryotic hyphae formation and required for the formation of invading hyphae during plant infection. This Mycosarcoma maydis (Corn smut fungus) protein is Chitin synthase 8.